The chain runs to 241 residues: Pyridoxine/pyridoxamine 5'-phosphate oxidase (241 aa).

A disordered region spans residues 1–35 (MASNPPSAASPRRTAVSPGADRPDGPDPAGQRQSY). Residues 32–35 (RQSY) and Lys92 contribute to the substrate site. FMN-binding positions include 87 to 92 (RTVLLK), 102 to 103 (YT), Arg108, Lys109, and Gln131. The substrate site is built by Tyr149, Arg153, and Ser157. Residues 166-167 (QS) and Trp212 contribute to the FMN site. Residue 218–220 (RLH) coordinates substrate. Arg222 provides a ligand contact to FMN.

This sequence belongs to the pyridoxamine 5'-phosphate oxidase family. Homodimer. Requires FMN as cofactor.

It catalyses the reaction pyridoxamine 5'-phosphate + O2 + H2O = pyridoxal 5'-phosphate + H2O2 + NH4(+). The catalysed reaction is pyridoxine 5'-phosphate + O2 = pyridoxal 5'-phosphate + H2O2. The protein operates within cofactor metabolism; pyridoxal 5'-phosphate salvage; pyridoxal 5'-phosphate from pyridoxamine 5'-phosphate: step 1/1. Its pathway is cofactor metabolism; pyridoxal 5'-phosphate salvage; pyridoxal 5'-phosphate from pyridoxine 5'-phosphate: step 1/1. Its function is as follows. Catalyzes the oxidation of either pyridoxine 5'-phosphate (PNP) or pyridoxamine 5'-phosphate (PMP) into pyridoxal 5'-phosphate (PLP). This chain is Pyridoxine/pyridoxamine 5'-phosphate oxidase, found in Frankia alni (strain DSM 45986 / CECT 9034 / ACN14a).